The sequence spans 370 residues: Chaperone protein DnaJ (370 aa).

One can recognise a J domain in the interval 5–70 (DYYEVLGVSK…EKRSMYDRMG (66 aa)). The CR-type zinc finger occupies 134 to 212 (GVKKTITFTA…CHGSGVADRQ (79 aa)). 8 residues coordinate Zn(2+): Cys147, Cys150, Cys164, Cys167, Cys186, Cys189, Cys200, and Cys203. 4 CXXCXGXG motif repeats span residues 147 to 154 (CDVCDGKG), 164 to 171 (CKTCHGSG), 186 to 193 (CGTCRGQG), and 200 to 207 (CHACHGSG). A disordered region spans residues 351–370 (DGEDSASSPKKKSFFDRLFD).

It belongs to the DnaJ family. Homodimer. It depends on Zn(2+) as a cofactor.

The protein localises to the cytoplasm. Participates actively in the response to hyperosmotic and heat shock by preventing the aggregation of stress-denatured proteins and by disaggregating proteins, also in an autonomous, DnaK-independent fashion. Unfolded proteins bind initially to DnaJ; upon interaction with the DnaJ-bound protein, DnaK hydrolyzes its bound ATP, resulting in the formation of a stable complex. GrpE releases ADP from DnaK; ATP binding to DnaK triggers the release of the substrate protein, thus completing the reaction cycle. Several rounds of ATP-dependent interactions between DnaJ, DnaK and GrpE are required for fully efficient folding. Also involved, together with DnaK and GrpE, in the DNA replication of plasmids through activation of initiation proteins. The protein is Chaperone protein DnaJ of Acinetobacter baumannii (strain AB0057).